The primary structure comprises 487 residues: N-succinylglutamate 5-semialdehyde dehydrogenase (487 aa).

221–226 contributes to the NAD(+) binding site; it reads GSSDTG. Catalysis depends on residues Glu-244 and Cys-278.

It belongs to the aldehyde dehydrogenase family. AstD subfamily.

The enzyme catalyses N-succinyl-L-glutamate 5-semialdehyde + NAD(+) + H2O = N-succinyl-L-glutamate + NADH + 2 H(+). Its pathway is amino-acid degradation; L-arginine degradation via AST pathway; L-glutamate and succinate from L-arginine: step 4/5. Its function is as follows. Catalyzes the NAD-dependent reduction of succinylglutamate semialdehyde into succinylglutamate. The protein is N-succinylglutamate 5-semialdehyde dehydrogenase of Paraburkholderia xenovorans (strain LB400).